The chain runs to 384 residues: Mannitol-1-phosphate 5-dehydrogenase (384 aa).

Residue 3-14 (AVHFGAGNIGRG) participates in NAD(+) binding.

It belongs to the mannitol dehydrogenase family.

It carries out the reaction D-mannitol 1-phosphate + NAD(+) = beta-D-fructose 6-phosphate + NADH + H(+). In Arthrobacter sp. (strain FB24), this protein is Mannitol-1-phosphate 5-dehydrogenase.